A 116-amino-acid chain; its full sequence is Large ribosomal subunit protein uL18 (116 aa).

This sequence belongs to the universal ribosomal protein uL18 family. In terms of assembly, part of the 50S ribosomal subunit; part of the 5S rRNA/L5/L18/L25 subcomplex. Contacts the 5S and 23S rRNAs.

Its function is as follows. This is one of the proteins that bind and probably mediate the attachment of the 5S RNA into the large ribosomal subunit, where it forms part of the central protuberance. The protein is Large ribosomal subunit protein uL18 of Pseudomonas fluorescens (strain SBW25).